We begin with the raw amino-acid sequence, 591 residues long: MDRKVLMLAVILFALAVRFQNFGEIFDSGIYYTGYDSYYHMRLVEVMVKESFRPDYDYYINYPFGLKITWPPLFDYILAFPGMLFGFHSSEIFAVFLPVILGVLSVVLICLTALQIVNNQTFALISAFIYAAAPVAVWKTVLGQADHHALVIFLFLLSAYLLLKDGVWKILAGLPMLFMALAWLGSPIYGALLAFSALVHFDRKALRLVAASYLIPAISFVLYPPVGISFFGLAAFLFVGSVVKGYEDRFRNATIYYIALSLATVLIIYFIPLPHFEFVKGGINYIFGANIYLPTISEARSLQIFEIISASGYIYFIFALISVLFFRNRFVLSMFFLSFILALMQLRFTEVLVVPSALLSAYLVSLVLERLEYPVFEKADEEEKSRRRKRKDRKVKQKNAEVEWKDHAVVAAFLVILAIPCIVVAVVPFDLTEDWKEALEWMRTSLEEQNYLNPYEKPEYSVMSWWDYGNWILYVSKKAVVCNNFQAGAVDAAKFFTAKSEDEAIKIAKKRGVRYVVTADEITMKDANNTKFPAIMRIAGYNVDLMTEGEILNFFNHTVLYRLHMENAENLTHFRLVKEFGDVKIFEVVGS.

Over 1-5 (MDRKV) the chain is Cytoplasmic. The chain crosses the membrane as a helical span at residues 6 to 26 (LMLAVILFALAVRFQNFGEIF). The Extracellular segment spans residues 27 to 67 (DSGIYYTGYDSYYHMRLVEVMVKESFRPDYDYYINYPFGLK). Positions 34 to 36 (GYD) match the DXD motif 1 motif. Aspartate 36 is a Mn(2+) binding site. The chain crosses the membrane as a helical span at residues 68–88 (ITWPPLFDYILAFPGMLFGFH). Topologically, residues 89 to 91 (SSE) are cytoplasmic. Residues 92 to 112 (IFAVFLPVILGVLSVVLICLT) traverse the membrane as a helical segment. The Extracellular segment spans residues 113 to 121 (ALQIVNNQT). Residues 122–142 (FALISAFIYAAAPVAVWKTVL) form a helical membrane-spanning segment. Residues 143-147 (GQADH) are Cytoplasmic-facing. Aspartate 146 contributes to the Mn(2+) binding site. A DXD motif 2 motif is present at residues 146–148 (DHH). A glycophospholipid is bound at residue histidine 147. Histidine 148 contributes to the Mn(2+) binding site. The helical transmembrane segment at 148-168 (HALVIFLFLLSAYLLLKDGVW) threads the bilayer. Position 169 (lysine 169) is a topological domain, extracellular. The chain crosses the membrane as a helical span at residues 170 to 190 (ILAGLPMLFMALAWLGSPIYG). Residues 191-219 (ALLAFSALVHFDRKALRLVAASYLIPAIS) are Cytoplasmic-facing. A helical membrane pass occupies residues 220–240 (FVLYPPVGISFFGLAAFLFVG). At 241-252 (SVVKGYEDRFRN) the chain is on the extracellular side. Residues 253-273 (ATIYYIALSLATVLIIYFIPL) traverse the membrane as a helical segment. At 274–275 (PH) the chain is on the cytoplasmic side. The chain crosses the membrane as a helical span at residues 276–296 (FEFVKGGINYIFGANIYLPTI). The TIXE motif signature appears at 295–298 (TISE). The Extracellular segment spans residues 297–303 (SEARSLQ). A helical membrane pass occupies residues 304–324 (IFEIISASGYIYFIFALISVL). The Cytoplasmic segment spans residues 325 to 327 (FFR). Residues 328-344 (NRFVLSMFFLSFILALM) traverse the membrane as a helical segment. The Extracellular portion of the chain corresponds to 345-347 (QLR). Arginine 347 contacts a glycophospholipid. Residues 348–368 (FTEVLVVPSALLSAYLVSLVL) form a helical membrane-spanning segment. The Cytoplasmic portion of the chain corresponds to 369–408 (ERLEYPVFEKADEEEKSRRRKRKDRKVKQKNAEVEWKDHA). The helical transmembrane segment at 409 to 429 (VVAAFLVILAIPCIVVAVVPF) threads the bilayer. The Extracellular segment spans residues 430 to 591 (DLTEDWKEAL…DVKIFEVVGS (162 aa)). The interval 465-467 (WWD) is interacts with target acceptor peptide in protein substrate. Positions 465 to 469 (WWDYG) match the WWDYG motif motif. The short motif at 521-535 (EITMKDANNTKFPAI) is the DKi motif element.

It belongs to the STT3 family. Mn(2+) is required as a cofactor. It depends on Mg(2+) as a cofactor. Requires Zn(2+) as cofactor.

It localises to the cell membrane. The catalysed reaction is an archaeal dolichyl phosphooligosaccharide + [protein]-L-asparagine = an archaeal dolichyl phosphate + a glycoprotein with the oligosaccharide chain attached by N-beta-D-glycosyl linkage to a protein L-asparagine.. It functions in the pathway protein modification; protein glycosylation. In terms of biological role, oligosaccharyl transferase (OST) that catalyzes the initial transfer of a defined glycan (a GalNAc-linked heptasaccharide composed of 4 Hex, 3 dHex and a sulfate for A.fulgidus AglB-S) from the lipid carrier dolichol-monophosphate to an asparagine residue within an Asn-X-Ser/Thr consensus motif in nascent polypeptide chains, the first step in protein N-glycosylation. In Archaeoglobus fulgidus (strain ATCC 49558 / DSM 4304 / JCM 9628 / NBRC 100126 / VC-16), this protein is Dolichyl-phosphooligosaccharide-protein glycotransferase 1 (aglB1).